The sequence spans 218 residues: Ras-related protein Rab-11B (218 aa).

An N-acetylglycine modification is found at glycine 2. A Citrulline modification is found at arginine 4. Serine 20, glycine 21, glycine 23, lysine 24, serine 25, asparagine 26, asparagine 37, leucine 38, serine 40, serine 42, and threonine 43 together coordinate GTP. Serine 25 serves as a coordination point for Mg(2+). Residues 36–47 carry the Switch 1 motif; that stretch reads FNLESKSTIGVE. Mg(2+)-binding residues include threonine 43 and aspartate 66. The short motif at 67 to 86 is the Switch 2 element; it reads TAGQERYRAITSAYYRGAVG. The GTP site is built by glycine 69, asparagine 124, lysine 125, aspartate 127, alanine 155, and leucine 156. The tract at residues 184–218 is disordered; sequence RAAHDESPGNNVVDISVPPTTDGQRPNKLQCCQSL. S-geranylgeranyl cysteine attachment occurs at residues cysteine 214 and cysteine 215. The residue at position 215 (cysteine 215) is a Cysteine methyl ester. Positions 216–218 are cleaved as a propeptide — removed in mature form; sequence QSL.

It belongs to the small GTPase superfamily. Rab family. As to quaternary structure, interacts with KCNMA1. Interacts with RAB11FIP1, RAB11FIP2, RAB11FIP3 and RAB11FIP4. May interact with TBC1D14. Interacts with ATP6V1E1. Interacts with PI4KB. Interacts (GDP-bound form) with ZFYVE27. Interacts (GDP-bound form) with KIF5A in a ZFYVE27-dependent manner. Interacts with RELCH. Interacts (in GTP-bound form) with TBC1D8B (via domain Rab-GAP TBC). Forms a complex containing RAB11B, ASAP1, Rabin8/RAB3IP, RAP11FIP3 and ARF4. Interacts with WDR44. Mg(2+) is required as a cofactor. Post-translationally, citrullinated by PADI4. Abundantly expressed in brain, heart and testis. Also detected in kidney and pancreatic islets.

It localises to the recycling endosome membrane. Its subcellular location is the cytoplasmic vesicle. It is found in the secretory vesicle. The protein localises to the synaptic vesicle membrane. The protein resides in the phagosome membrane. It catalyses the reaction GTP + H2O = GDP + phosphate + H(+). Regulated by guanine nucleotide exchange factors (GEFs) which promote the exchange of bound GDP for free GTP. Regulated by GTPase activating proteins (GAPs) which increase the GTP hydrolysis activity. Inhibited by GDP dissociation inhibitors (GDIs) which prevent Rab-GDP dissociation. The small GTPases Rab are key regulators of intracellular membrane trafficking, from the formation of transport vesicles to their fusion with membranes. Rabs cycle between an inactive GDP-bound form and an active GTP-bound form that is able to recruit to membranes different set of downstream effectors directly responsible for vesicle formation, movement, tethering and fusion. The small Rab GTPase RAB11B plays a role in endocytic recycling, regulating apical recycling of several transmembrane proteins including cystic fibrosis transmembrane conductance regulator/CFTR, epithelial sodium channel/ENaC, potassium voltage-gated channel, and voltage-dependent L-type calcium channel. May also regulate constitutive and regulated secretion, like insulin granule exocytosis. Required for melanosome transport and release from melanocytes. Also regulates V-ATPase intracellular transport in response to extracellular acidosis. Promotes Rabin8/RAB3IP preciliary vesicular trafficking to mother centriole by forming a ciliary targeting complex containing Rab11, ASAP1, Rabin8/RAB3IP, RAB11FIP3 and ARF4, thereby regulating ciliogenesis initiation. On the contrary, upon LPAR1 receptor signaling pathway activation, interaction with phosphorylated WDR44 prevents Rab11-RAB3IP-RAB11FIP3 complex formation and cilia growth. This is Ras-related protein Rab-11B from Mus musculus (Mouse).